A 373-amino-acid polypeptide reads, in one-letter code: Ubiquitin carboxyl-terminal hydrolase 50 (373 aa).

Residues 44–364 enclose the USP domain; it reads TGLRNLGNTC…TAYLLFYSCQ (321 aa). C53 (nucleophile) is an active-site residue. H322 functions as the Proton acceptor in the catalytic mechanism.

The protein belongs to the peptidase C19 family.

The protein localises to the cytoplasm. Its subcellular location is the cytoskeleton. It is found in the microtubule organizing center. It localises to the centrosome. The protein resides in the nucleus. It catalyses the reaction Thiol-dependent hydrolysis of ester, thioester, amide, peptide and isopeptide bonds formed by the C-terminal Gly of ubiquitin (a 76-residue protein attached to proteins as an intracellular targeting signal).. Deubiquitinating enzyme that removes conjugated ubiquitin from specific proteins to regulate different cellular processes. Regulates the inflammasome signaling pathway by deubiquitinating 'Lys-63'-linked polyubiquitination of the PYCARD/ASC adapter protein. Regulates the ubiquitination and stability of the ACE2 protein. Acts as a negative regulator of the G2/M checkpoint pathway, by preventing serine/threonine kinase WEE1 degradation, thereby repressing entry into mitosis following activation of the G2/M DNA damage checkpoint. The protein is Ubiquitin carboxyl-terminal hydrolase 50 (USP50) of Macaca fascicularis (Crab-eating macaque).